A 367-amino-acid chain; its full sequence is DNA replication and repair protein RecF (367 aa).

Position 30–37 (30–37 (GANGSGKT)) interacts with ATP.

Belongs to the RecF family.

The protein localises to the cytoplasm. Its function is as follows. The RecF protein is involved in DNA metabolism; it is required for DNA replication and normal SOS inducibility. RecF binds preferentially to single-stranded, linear DNA. It also seems to bind ATP. In Pseudomonas syringae pv. tomato (strain ATCC BAA-871 / DC3000), this protein is DNA replication and repair protein RecF.